The sequence spans 155 residues: Small ribosomal subunit protein uS17 (155 aa).

At Ala-2 the chain carries N-acetylalanine.

Belongs to the universal ribosomal protein uS17 family.

This Drosophila yakuba (Fruit fly) protein is Small ribosomal subunit protein uS17.